Here is a 342-residue protein sequence, read N- to C-terminus: Galactose mutarotase (342 aa).

Beta-D-galactose contacts are provided by residues 81–82 (NR) and His-107. Ser-124 is modified (phosphoserine). Catalysis depends on His-176, which acts as the Proton donor. Beta-D-galactose-binding positions include 176 to 178 (HSY), Asp-243, Gln-279, and Glu-307. The Proton acceptor role is filled by Glu-307.

Belongs to the aldose epimerase family. Monomer.

Its subcellular location is the cytoplasm. It carries out the reaction alpha-D-galactose = beta-D-galactose. The enzyme catalyses alpha-D-glucose = beta-D-glucose. The protein operates within carbohydrate metabolism; hexose metabolism. Its pathway is carbohydrate metabolism; galactose metabolism. Its function is as follows. Mutarotase that catalyzes the interconversion of beta-D-galactose and alpha-D-galactose during galactose metabolism. Beta-D-galactose is metabolized in the liver into glucose 1-phosphate, the primary metabolic fuel, by the action of four enzymes that constitute the Leloir pathway: GALM, GALK1 (galactokinase), GALT (galactose-1-phosphate uridylyltransferase) and GALE (UDP-galactose-4'-epimerase). Involved in the maintenance of the equilibrium between the beta- and alpha-anomers of galactose, therefore ensuring a sufficient supply of the alpha-anomer for GALK1. Also active on D-glucose although shows a preference for galactose over glucose. This Bos taurus (Bovine) protein is Galactose mutarotase (GALM).